A 341-amino-acid chain; its full sequence is S-adenosylmethionine:tRNA ribosyltransferase-isomerase (341 aa).

This sequence belongs to the QueA family. Monomer.

The protein localises to the cytoplasm. The catalysed reaction is 7-aminomethyl-7-carbaguanosine(34) in tRNA + S-adenosyl-L-methionine = epoxyqueuosine(34) in tRNA + adenine + L-methionine + 2 H(+). It participates in tRNA modification; tRNA-queuosine biosynthesis. In terms of biological role, transfers and isomerizes the ribose moiety from AdoMet to the 7-aminomethyl group of 7-deazaguanine (preQ1-tRNA) to give epoxyqueuosine (oQ-tRNA). In Acetivibrio thermocellus (strain ATCC 27405 / DSM 1237 / JCM 9322 / NBRC 103400 / NCIMB 10682 / NRRL B-4536 / VPI 7372) (Clostridium thermocellum), this protein is S-adenosylmethionine:tRNA ribosyltransferase-isomerase.